The following is a 75-amino-acid chain: Large ribosomal subunit protein bL31 (75 aa).

This sequence belongs to the bacterial ribosomal protein bL31 family. Type A subfamily. Part of the 50S ribosomal subunit.

Binds the 23S rRNA. The chain is Large ribosomal subunit protein bL31 from Bradyrhizobium diazoefficiens (strain JCM 10833 / BCRC 13528 / IAM 13628 / NBRC 14792 / USDA 110).